Consider the following 363-residue polypeptide: Ribosomal RNA large subunit methyltransferase M (363 aa).

Residues Ser190, 223 to 226 (CPGG), Asp242, Asp262, and Asp280 each bind S-adenosyl-L-methionine. The Proton acceptor role is filled by Lys309.

Belongs to the class I-like SAM-binding methyltransferase superfamily. RNA methyltransferase RlmE family. RlmM subfamily. Monomer.

The protein resides in the cytoplasm. It carries out the reaction cytidine(2498) in 23S rRNA + S-adenosyl-L-methionine = 2'-O-methylcytidine(2498) in 23S rRNA + S-adenosyl-L-homocysteine + H(+). Catalyzes the 2'-O-methylation at nucleotide C2498 in 23S rRNA. The protein is Ribosomal RNA large subunit methyltransferase M of Actinobacillus pleuropneumoniae serotype 5b (strain L20).